A 374-amino-acid polypeptide reads, in one-letter code: Chaperone protein DnaJ (374 aa).

The J domain maps to 5 to 70 (DYYEVLGLEK…DKKANYDRFG (66 aa)). The segment at 137–219 (GVEKSINITR…CHGAGHVRKK (83 aa)) adopts a CR-type zinc-finger fold. Residues cysteine 150, cysteine 153, cysteine 167, cysteine 170, cysteine 193, cysteine 196, cysteine 207, and cysteine 210 each contribute to the Zn(2+) site. CXXCXGXG motif repeat units lie at residues 150-157 (CETCGGTG), 167-174 (CDKCGGTG), 193-200 (CDKCGGRG), and 207-214 (CHECHGAG).

The protein belongs to the DnaJ family. Homodimer. Requires Zn(2+) as cofactor.

Its subcellular location is the cytoplasm. Its function is as follows. Participates actively in the response to hyperosmotic and heat shock by preventing the aggregation of stress-denatured proteins and by disaggregating proteins, also in an autonomous, DnaK-independent fashion. Unfolded proteins bind initially to DnaJ; upon interaction with the DnaJ-bound protein, DnaK hydrolyzes its bound ATP, resulting in the formation of a stable complex. GrpE releases ADP from DnaK; ATP binding to DnaK triggers the release of the substrate protein, thus completing the reaction cycle. Several rounds of ATP-dependent interactions between DnaJ, DnaK and GrpE are required for fully efficient folding. Also involved, together with DnaK and GrpE, in the DNA replication of plasmids through activation of initiation proteins. This chain is Chaperone protein DnaJ, found in Clostridium acetobutylicum (strain ATCC 824 / DSM 792 / JCM 1419 / IAM 19013 / LMG 5710 / NBRC 13948 / NRRL B-527 / VKM B-1787 / 2291 / W).